Here is a 503-residue protein sequence, read N- to C-terminus: MASLLLTSSSMITTSCRSMVLRSGLPIGSSFPSLRLTRPYDKATLFVSCCSAESKKVATSATDLKPIMERRPEYIPNKLPHKNYVRVLDTTLRDGEQSPGAALTPPQKLEIARQLAKLRVDIMEVGFPVSSEEEFEAIKTIAKTVGNEVDEETGYVPVICGIARCKKRDIEATWEALKYAKRPRVMLFTSTSEIHMKYKLKKTKEEVIEMAVNSVKYAKSLGFKDIQFGCEDGGRTEKDFICKILGESIKAGATTVGFADTVGINMPQEFGELVAYVIENTPGADDIVFAIHCHNDLGVATANTISGICAGARQVEVTINGIGERSGNAPLEEVVMALKCRGESLMDGVYTKIDSRQIMATSKMVQEHTGMYVQPHKPIVGDNCFVHESGIHQDGILKNRSTYEILSPEDVGIVKSENSGIVLGKLSGRHAVKDRLKELGYEISDEKFNDIFSRYRELTKDKKRITDADLKALVVNGAEISSEKLNSKGINDLMSSPQISAVV.

The transit peptide at 1–51 (MASLLLTSSSMITTSCRSMVLRSGLPIGSSFPSLRLTRPYDKATLFVSCCS) directs the protein to the chloroplast. The 275-residue stretch at 85 to 359 (VRVLDTTLRD…YTKIDSRQIM (275 aa)) folds into the Pyruvate carboxyltransferase domain.

The protein belongs to the alpha-IPM synthase/homocitrate synthase family. It depends on Mn(2+) as a cofactor. As to expression, highly expressed in roots, leaves, and siliques. Lower amounts in stems and flowers.

The protein resides in the plastid. It localises to the chloroplast. It carries out the reaction an omega-(methylsulfanyl)-2-oxoalkanoate + acetyl-CoA + H2O = a 2-(omega-methylsulfanyl)alkylmalate + CoA + H(+). Its activity is regulated as follows. Not activated by ATP. Functionally, determines the side chain length of aliphatic glucosinolate structures. Accepts all the omega-methylthio-2-oxoalkanoic acids needed to form the known C3 to C8 glucosinolates. Also able to convert pyruvate to citramalate, 2-oxoisovalerate to isopropylmalate, 4-methyl-2-oxopentanoate and 5-methyl-2-oxohexanoate for Leu-derived glucosinolates, 3-methyl-2-oxopentanoate for Ile-derived glucosinolates and phenylpyruvate to phenylethylglucosinolate. In Arabidopsis thaliana (Mouse-ear cress), this protein is Methylthioalkylmalate synthase 3, chloroplastic (MAM3).